Consider the following 337-residue polypeptide: Lipoyl synthase (337 aa).

[4Fe-4S] cluster is bound by residues C81, C86, C92, C107, C111, C114, and S323. The Radical SAM core domain maps to 93–312; the sequence is FSHGTATFMI…EEYGNALGFS (220 aa).

The protein belongs to the radical SAM superfamily. Lipoyl synthase family. The cofactor is [4Fe-4S] cluster.

It localises to the cytoplasm. The catalysed reaction is [[Fe-S] cluster scaffold protein carrying a second [4Fe-4S](2+) cluster] + N(6)-octanoyl-L-lysyl-[protein] + 2 oxidized [2Fe-2S]-[ferredoxin] + 2 S-adenosyl-L-methionine + 4 H(+) = [[Fe-S] cluster scaffold protein] + N(6)-[(R)-dihydrolipoyl]-L-lysyl-[protein] + 4 Fe(3+) + 2 hydrogen sulfide + 2 5'-deoxyadenosine + 2 L-methionine + 2 reduced [2Fe-2S]-[ferredoxin]. The protein operates within protein modification; protein lipoylation via endogenous pathway; protein N(6)-(lipoyl)lysine from octanoyl-[acyl-carrier-protein]: step 2/2. Functionally, catalyzes the radical-mediated insertion of two sulfur atoms into the C-6 and C-8 positions of the octanoyl moiety bound to the lipoyl domains of lipoate-dependent enzymes, thereby converting the octanoylated domains into lipoylated derivatives. In Xanthomonas oryzae pv. oryzae (strain MAFF 311018), this protein is Lipoyl synthase.